A 952-amino-acid chain; its full sequence is UPF0182 protein SRU_2225 (952 aa).

7 consecutive transmembrane segments (helical) span residues 12–32 (ILLGIIGVVFTVLLVTPGLVV), 52–72 (AQVLLFVLVFLVAGLYFGGNF), 109–129 (LGYVVAGVLSLLFAAGFSGRW), 168–188 (AVVGLAFLGLLALVTGYVIAG), 207–227 (LGANLIFLLLGWAWGFYLDLY), 247–267 (VVIPALYVMVAATLVLAGLVG), and 277–297 (LLGIGGAGYLVLLVGGLVLAP). Residues 917–952 (VPLPDTTGTVPPPTSSDTTGTMTAPTGDVSEVTGGS) are disordered. Polar residues predominate over residues 931–940 (SSDTTGTMTA).

This sequence belongs to the UPF0182 family.

It localises to the cell membrane. The protein is UPF0182 protein SRU_2225 of Salinibacter ruber (strain DSM 13855 / M31).